Reading from the N-terminus, the 385-residue chain is uncharacterized protein (385 aa).

The protein belongs to the phage portal family. HK97 subfamily.

This is an uncharacterized protein from Rickettsia felis (strain ATCC VR-1525 / URRWXCal2) (Rickettsia azadi).